We begin with the raw amino-acid sequence, 374 residues long: Proteinase-activated receptor 3 (374 aa).

Residues 1 to 21 (MKALIFAAAGLLLLLPTFCQS) form the signal peptide. Positions 22-38 (GMENDTNNLAKPTLPIK) are cleaved as a propeptide — removed for receptor activation. N25 and N82 each carry an N-linked (GlcNAc...) asparagine glycan. The Extracellular portion of the chain corresponds to 39–94 (TFRGAPPNSFEEFPFSALEGWTGATITVKIKCPEESASHLHVKNATMGYLTSSLST). The helical transmembrane segment at 95 to 120 (KLIPAIYLLVFVVGVPANAVTLWMLF) threads the bilayer. At 121–128 (FRTRSICT) the chain is on the cytoplasmic side. A helical transmembrane segment spans residues 129 to 148 (TVFYTNLAIADFLFCVTLPF). The Extracellular segment spans residues 149–167 (KIAYHLNGNNWVFGEVLCR). A disulfide bridge links C166 with C245. The chain crosses the membrane as a helical span at residues 168 to 189 (ATTVIFYGNMYCSILLLACISI). Over 190–206 (NRYLAIVHPFTYRGLPK) the chain is Cytoplasmic. The chain crosses the membrane as a helical span at residues 207 to 230 (HTYALVTCGLVWATVFLYMLPFFI). At 231-260 (LKQEYYLVQPDITTCHDVHNTCESSSPFQL) the chain is on the extracellular side. Residues 261-280 (YYFISLAFFGFLIPFVLIIY) form a helical membrane-spanning segment. At 281 to 297 (CYAAIIRTLNAYDHRWL) the chain is on the cytoplasmic side. The chain crosses the membrane as a helical span at residues 298 to 322 (WYVKASLLILVIFTICFAPSNIILI). Residues 323 to 336 (IHHANYYYNNTDGL) are Extracellular-facing. A glycan (N-linked (GlcNAc...) asparagine) is linked at N331. Residues 337–361 (YFIYLIALCLGSLNSCLDPFLYFLM) traverse the membrane as a helical segment. Topologically, residues 362–374 (SKTRNHSTAYLTK) are cytoplasmic.

This sequence belongs to the G-protein coupled receptor 1 family. As to quaternary structure, interacts with INSC/inscuteable and probably GPSM2. In terms of processing, a proteolytic cleavage generates a new N-terminus that functions as a tethered ligand. In terms of tissue distribution, highest expression in the megakaryocytes of the bone marrow, lower in mature megakaryocytes, in platelets and in a variety of other tissues such as heart and gut.

Its subcellular location is the cell membrane. Receptor for activated thrombin coupled to G proteins that stimulate phosphoinositide hydrolysis. The sequence is that of Proteinase-activated receptor 3 (F2RL2) from Homo sapiens (Human).